Reading from the N-terminus, the 450-residue chain is FAD-dependent monooxygenase okaB (450 aa).

The chain crosses the membrane as a helical span at residues 14-34; that stretch reads IVIIIVGLGIAGLSAAIECHG. Positions 43 and 116 each coordinate FAD. Arg-194 is a catalytic residue. FAD contacts are provided by Asp-318 and Gly-331.

This sequence belongs to the paxM FAD-dependent monooxygenase family.

It localises to the membrane. It catalyses the reaction cyclo(N(8)-(alpha,alpha-dimethylallyl)-L-Trp-6a-(alpha,alpha-dimethylallyl)-L-Trp) + AH2 + O2 = okaramine C + A + H2O. It functions in the pathway alkaloid biosynthesis. Its function is as follows. FAD-dependent monooxygenase; part of the gene cluster that mediates the biosynthesis of okaramine B, a prenylated indole alkaloid that possesses an unusual octacyclic ring system, including a four-membered azetidine ring and an eight-membered azocine ring, and that exhibits insecticidal activity against silkworm larvae. Within the pathway, okaC performs indole 2,3-epoxidation, facilitating the formation of the hexahydropyrrolo[2,3-b]indole (HPI) moiety of okaramine C. okaC then performs asymmetric reverse prenylation of cyclo(L-Trp-L-Trp) at N-1 and C-2' of the indole ring to produce the cyclic prenylated tryptophan dimer cyclo(N8-(alpha,alpha-dimethylallyl)-L-Trp-6a-(alpha,alpha-dime-thylallyl)-L-Trp). The biosynthesis begins with the NRPS okaA that condenses two tryptophan molecules into cyclo(L-Trp-L-Trp). Prenylation by the prenyltransferase okaC then leads to the formation of cyclo(N8-(alpha,alpha-dimethylallyl)-L-Trp-6a-(alpha,alpha-dime-thylallyl)-L-Trp). This is followed by indole 2,3-epoxidation by the FAD-dependent monooxygenase okaB to facilitate the formation of the hexahydropyrrolo[2,3-b]indole (HPI) moiety of okaramine C. The cytochrome P450 monooxygenase okaD then likely catalyzes formation of the eight-membered ring of okaramine A. The dioxygenase okaE further forms the unusual 2-dimethyl-3-methyl-azetidine ring to yield 12-deshydroxyl okaramine E, as well as the hydroxylation of 12-deshydroxyl okaramine E to produce okaramine E. The cytochrome P450 monoxygenase okaG converts 12-deshydroxyl okaramine E into 3-desmethyl okaramine B which is further methylated by the methyltransferase okaF into okaramine B. In a shunt pathway, okaG and okaF together are also able to convert okaramine E into okaramine D. Okaramine H is produced by nonenzymatic conversion from okaramine A. The polypeptide is FAD-dependent monooxygenase okaB (Penicillium ochrochloron).